The primary structure comprises 625 residues: tRNA uridine 5-carboxymethylaminomethyl modification enzyme MnmG (625 aa).

FAD contacts are provided by residues Gly-13–Gly-18, Val-125, and Ser-182. Gly-276–Phe-290 serves as a coordination point for NAD(+). Position 373 (Gln-373) interacts with FAD.

It belongs to the MnmG family. In terms of assembly, homodimer. Heterotetramer of two MnmE and two MnmG subunits. Requires FAD as cofactor.

Its subcellular location is the cytoplasm. Its function is as follows. NAD-binding protein involved in the addition of a carboxymethylaminomethyl (cmnm) group at the wobble position (U34) of certain tRNAs, forming tRNA-cmnm(5)s(2)U34. This Lactococcus lactis subsp. cremoris (strain MG1363) protein is tRNA uridine 5-carboxymethylaminomethyl modification enzyme MnmG.